The following is an 85-amino-acid chain: Dr hemagglutinin AFA-III operon regulatory protein AfaF (85 aa).

The protein to E.coli PapI and DaaF.

Functionally, may have a possible regulatory function on the expression of the other AFA-III genes. The sequence is that of Dr hemagglutinin AFA-III operon regulatory protein AfaF (afaF) from Escherichia coli.